The primary structure comprises 543 residues: Headcase protein homolog (543 aa).

Disordered stretches follow at residues 1–26 (MPNP…QENG) and 197–283 (MQDE…LSPA). 2 stretches are compositionally biased toward basic and acidic residues: residues 197-211 (MQDE…EKNT) and 235-250 (PSHD…RQNS). S264 and S268 each carry phosphoserine.

Expressed in all tissues examined. Highest levels are in the spleen, thymus, peripheral blood and heart. Lowest in the kidney and pancreas.

Its function is as follows. May play an important role in some human cancers. May be part of the regulatory mechanism in the development of epithelial tube networks such as the circulatory system and lungs. The sequence is that of Headcase protein homolog (HECA) from Homo sapiens (Human).